We begin with the raw amino-acid sequence, 162 residues long: Shikimate kinase (162 aa).

11 to 16 (GSGKSS) provides a ligand contact to ATP. A Mg(2+)-binding site is contributed by S15. 3 residues coordinate substrate: D33, R57, and G80. Residues 109-123 (NQKEREKRPLLNNLT) form an LID domain region. R116 is an ATP binding site. R132 provides a ligand contact to substrate.

The protein belongs to the shikimate kinase family. In terms of assembly, monomer. Requires Mg(2+) as cofactor.

It localises to the cytoplasm. The catalysed reaction is shikimate + ATP = 3-phosphoshikimate + ADP + H(+). It functions in the pathway metabolic intermediate biosynthesis; chorismate biosynthesis; chorismate from D-erythrose 4-phosphate and phosphoenolpyruvate: step 5/7. Catalyzes the specific phosphorylation of the 3-hydroxyl group of shikimic acid using ATP as a cosubstrate. The protein is Shikimate kinase (aroK) of Helicobacter pylori (strain ATCC 700392 / 26695) (Campylobacter pylori).